The primary structure comprises 447 residues: Multicopper oxidase mco (447 aa).

Residues 1–25 (MMDMKENDQKRNDMMDMKSHDERKN) are compositionally biased toward basic and acidic residues. The segment at 1–43 (MMDMKENDQKRNDMMDMKSHDERKNLNSSQGKNEITFPKVLDP) is disordered. Residues His107, His109, His147, His149, His375, His378, His380, His428, Cys429, His430, His434, and Met439 each coordinate Cu cation.

This sequence belongs to the multicopper oxidase family. Cu cation is required as a cofactor.

The protein localises to the cytoplasm. In terms of biological role, may be involved in copper homeostasis and oxidative stress response. Oxidizes the substrate 3,3'-dimethoxybenzidine in vitro. Also possesses low levels of phenoloxidase and ferroxidase activities. The sequence is that of Multicopper oxidase mco (mco) from Staphylococcus aureus.